The following is a 173-amino-acid chain: uncharacterized protein (173 aa).

The next 4 helical transmembrane spans lie at 9–29 (FSIC…LLCV), 32–52 (ICSA…TFFH), 100–120 (MFLC…SFIV), and 127–147 (FLFL…GLYP).

The protein localises to the membrane. This is an uncharacterized protein from Saccharomyces cerevisiae (strain ATCC 204508 / S288c) (Baker's yeast).